A 331-amino-acid chain; its full sequence is Anthranilate phosphoribosyltransferase (331 aa).

Residues G79, G82–D83, S87, N89–T92, K107–S115, and S119 contribute to the 5-phospho-alpha-D-ribose 1-diphosphate site. G79 serves as a coordination point for anthranilate. S91 provides a ligand contact to Mg(2+). Position 110 (N110) interacts with anthranilate. R165 is an anthranilate binding site. Mg(2+) is bound by residues D223 and E224.

It belongs to the anthranilate phosphoribosyltransferase family. As to quaternary structure, homodimer. The cofactor is Mg(2+).

It carries out the reaction N-(5-phospho-beta-D-ribosyl)anthranilate + diphosphate = 5-phospho-alpha-D-ribose 1-diphosphate + anthranilate. Its pathway is amino-acid biosynthesis; L-tryptophan biosynthesis; L-tryptophan from chorismate: step 2/5. Catalyzes the transfer of the phosphoribosyl group of 5-phosphorylribose-1-pyrophosphate (PRPP) to anthranilate to yield N-(5'-phosphoribosyl)-anthranilate (PRA). In Buchnera aphidicola subsp. Schlechtendalia chinensis, this protein is Anthranilate phosphoribosyltransferase.